Consider the following 134-residue polypeptide: Profilin-3 (134 aa).

Residues cysteine 13 and cysteine 118 are joined by a disulfide bond. The Involved in PIP2 interaction signature appears at 84–100 (AVIRGKKGSGGITIKKT). Position 114 is a phosphothreonine (threonine 114).

The protein belongs to the profilin family. Occurs in many kinds of cells as a complex with monomeric actin in a 1:1 ratio. Phosphorylated by MAP kinases.

Its subcellular location is the cytoplasm. It localises to the cytoskeleton. Functionally, binds to actin and affects the structure of the cytoskeleton. At high concentrations, profilin prevents the polymerization of actin, whereas it enhances it at low concentrations. In Olea europaea (Common olive), this protein is Profilin-3.